The primary structure comprises 195 residues: PBAN-type neuropeptides (195 aa).

The N-terminal stretch at methionine 1 to glycine 33 is a signal peptide. Positions glutamate 34–isoleucine 63 are excised as a propeptide. At leucine 80 the chain carries Leucine amide. A propeptide spanning residues alanine 86 to glutamate 117 is cleaved from the precursor. Glutamine 120 carries the pyrrolidone carboxylic acid modification. Leucine 128 bears the Leucine amide mark. Residues glutamate 131 to glutamine 153 constitute a propeptide that is removed on maturation. Leucine amide is present on residues leucine 163 and leucine 175. Positions glutamine 178–phenylalanine 195 are excised as a propeptide.

It belongs to the pyrokinin family.

The protein localises to the secreted. Functionally, a hormone that controls sex pheromone production in females and pheromone responsiveness in male. Also mediates visceral muscle contractile activity (myotropic activity). This Apis mellifera (Honeybee) protein is PBAN-type neuropeptides.